The sequence spans 666 residues: MAAVQALPLSIDQNTEASGSQSHTNTRSPVTENTMGSVSSLISGRTYHDKQCRASEFSNKCRKPTNMPNCFKQQEGLLKTNYSSQDFLFNGLPTKKPSTTTSGNNGNYVYVNEDFKEEWHDARVPISPSSDAEDIREERSINGNIRGPPPKLIPISGKLEKNVEKTLIKPTAFKPVVPKKRNPSLQYLVQRNGGPGLSESQSSLNLLFNGNSAGIPEKHNSLSCRNIAHSGTMSDSGRTSLSSLPTSNTNCSHQLDSVSVSMGHINLDNHSNLNGYSDRASRGRTRPSNSDSGRSSSSKSTGSPILNDEILIRELEEKLKDREMELQQLKENLDENEAAICQVYEEKQKRCEQEMEELRQSCALKMKQAAQKAQRLQQVLQLQIFQLQQEKKKLQEDFSQLLQERELLEKRCASFEREQTEFGPRLEETKWEVCQKSGEISLLKQQLKDSQAELAQKSNEILLLRSQFREARCDLQISEEQVQELQDTAHTKTLEMEVCENELQRKKNEAELLREKVSKLDQEVASLREAAVASLRHGLCFCHEKEDPFLLYESDEAKAQRQNADNLQGLQQYVERLREALASERSRYQEQAEHFEDERRKWQEEKEKVIRYQKQLQHNYIQMYQQNRELERDIKQLTVELDAREFNEFDLHGAEIHFEEITATEI.

Disordered regions lie at residues 1–35 (MAAV…ENTM), 227–249 (IAHS…TSNT), and 266–307 (NLDN…PILN). Polar residues-rich tracts occupy residues 11 to 35 (IDQN…ENTM) and 227 to 238 (IAHSGTMSDSGR). Low complexity-rich tracts occupy residues 239 to 249 (TSLSSLPTSNT) and 286 to 304 (RPSN…TGSP). The stretch at 305 to 647 (ILNDEILIRE…TVELDAREFN (343 aa)) forms a coiled coil.

It belongs to the LZTS2 family.

It localises to the cytoplasm. It is found in the cytoskeleton. Its subcellular location is the microtubule organizing center. The protein localises to the centrosome. Negative regulator of katanin-mediated microtubule severing and release from the centrosome. Required for central spindle formation and the completion of cytokinesis. Negative regulator of the Wnt signaling pathway. Represses beta-catenin-mediated transcriptional activation by promoting the nuclear exclusion of beta-catenin. The polypeptide is Leucine zipper putative tumor suppressor 2 homolog (lzts2) (Xenopus laevis (African clawed frog)).